The sequence spans 271 residues: 3-methyl-2-oxobutanoate hydroxymethyltransferase (271 aa).

Residues Asp-53 and Asp-92 each coordinate Mg(2+). Residues Asp-53 to Ser-54, Asp-92, and Lys-120 contribute to the 3-methyl-2-oxobutanoate site. Glu-122 contributes to the Mg(2+) binding site. Catalysis depends on Glu-189, which acts as the Proton acceptor.

This sequence belongs to the PanB family. In terms of assembly, homodecamer; pentamer of dimers. Mg(2+) is required as a cofactor.

It is found in the cytoplasm. It carries out the reaction 3-methyl-2-oxobutanoate + (6R)-5,10-methylene-5,6,7,8-tetrahydrofolate + H2O = 2-dehydropantoate + (6S)-5,6,7,8-tetrahydrofolate. Its pathway is cofactor biosynthesis; (R)-pantothenate biosynthesis; (R)-pantoate from 3-methyl-2-oxobutanoate: step 1/2. Its function is as follows. Catalyzes the reversible reaction in which hydroxymethyl group from 5,10-methylenetetrahydrofolate is transferred onto alpha-ketoisovalerate to form ketopantoate. The polypeptide is 3-methyl-2-oxobutanoate hydroxymethyltransferase (Burkholderia thailandensis (strain ATCC 700388 / DSM 13276 / CCUG 48851 / CIP 106301 / E264)).